We begin with the raw amino-acid sequence, 664 residues long: MDKEAVKKRIEELRALLHYHNYRYYVLDQPEISDAEYDRMLRELISLEQQYPEFITPDSPSQRVGGEVAKEFREVAHLKPMYSLDNAFGPEDLKEFDRRVRSLLPGQEVEYEVELKIDGLAISLVYENGVLVRGATRGNGTTGEDITANVKTIKAIPLKLRNPIPLLEVRGEAYMPKESFARLNEQREERGEPLFANPRNAAAGSLRQLDPKVTAERDLSAFMYAIGEVQGYEPKTQAELMEWLSELGFKVNPYREVFNNIDDVINYCQSWHEKRFSLPYVIDGLVIKVNSLAQQEALGFTAKSPRWAIAYKFPAEIAETRLKDIIVRVGRTGVLTPTAIFEPVSLAGTTVTRASLHNEDYIREKDIRIGDIIRVQKAGEIIPEVVEVVKEKRTGAEKEFVMPDTCPVCQGKAVRLPGEAAWRCTNASCPAQLKEGIVHFASRGAMNIEGLGPAVAELLLEAGLIHNYADLYYLSAEEVARLPRMGKKSAENLINAIEKSKQNSLERLIYGLGIRLVGEKAARDLAVHFKELDKLIAAGEEEIMAIPSVGPKMAASIKAFFAQKENLELIEKLKAAGVNTKYLAEVRDNRLEGLTFVLTGTLSSFTRKEAEQLILSLGGKVSSSVSKKTSYVVVGEDPGSKLTKAKELGIPILTEEEFRQMVMS.

NAD(+)-binding positions include 34–38 (DAEYD), 83–84 (SL), and glutamate 114. Lysine 116 (N6-AMP-lysine intermediate) is an active-site residue. The NAD(+) site is built by arginine 137, glutamate 172, lysine 288, and lysine 312. Residues cysteine 406, cysteine 409, cysteine 424, and cysteine 429 each coordinate Zn(2+). The BRCT domain maps to 586-664 (VRDNRLEGLT…EEEFRQMVMS (79 aa)).

Belongs to the NAD-dependent DNA ligase family. LigA subfamily. Mg(2+) serves as cofactor. It depends on Mn(2+) as a cofactor.

The enzyme catalyses NAD(+) + (deoxyribonucleotide)n-3'-hydroxyl + 5'-phospho-(deoxyribonucleotide)m = (deoxyribonucleotide)n+m + AMP + beta-nicotinamide D-nucleotide.. Its function is as follows. DNA ligase that catalyzes the formation of phosphodiester linkages between 5'-phosphoryl and 3'-hydroxyl groups in double-stranded DNA using NAD as a coenzyme and as the energy source for the reaction. It is essential for DNA replication and repair of damaged DNA. This chain is DNA ligase, found in Carboxydothermus hydrogenoformans (strain ATCC BAA-161 / DSM 6008 / Z-2901).